Here is a 502-residue protein sequence, read N- to C-terminus: CDP-diacylglycerol--glycerol-3-phosphate 3-phosphatidyltransferase (502 aa).

58-65 provides a ligand contact to ATP; the sequence is STLYIGKE. 2 PLD phosphodiesterase domains span residues 143–169 and 410–443; these read GWGLQHMKIYGADDNLIISGANLSRDY and KGNTYHAKGFWLSTQHHKHPFLTTIGSSNYTSRS. Catalysis depends on residues H148, K150, and D155.

Belongs to the CDP-alcohol phosphatidyltransferase class-II family.

The protein resides in the mitochondrion. The catalysed reaction is a CDP-1,2-diacyl-sn-glycerol + sn-glycerol 3-phosphate = a 1,2-diacyl-sn-glycero-3-phospho-(1'-sn-glycero-3'-phosphate) + CMP + H(+). It participates in phospholipid metabolism; phosphatidylglycerol biosynthesis; phosphatidylglycerol from CDP-diacylglycerol: step 1/2. Functionally, functions in the biosynthesis of the anionic phospholipids phosphatidylglycerol and cardiolipin. This chain is CDP-diacylglycerol--glycerol-3-phosphate 3-phosphatidyltransferase (pgs1), found in Schizosaccharomyces pombe (strain 972 / ATCC 24843) (Fission yeast).